Consider the following 434-residue polypeptide: 3-phosphoshikimate 1-carboxyvinyltransferase (434 aa).

Positions 22, 23, and 27 each coordinate 3-phosphoshikimate. Lys22 lines the phosphoenolpyruvate pocket. Positions 93 and 121 each coordinate phosphoenolpyruvate. 3-phosphoshikimate contacts are provided by Ser168, Ser169, Gln170, Ser199, Asp320, and Lys347. Gln170 serves as a coordination point for phosphoenolpyruvate. Asp320 functions as the Proton acceptor in the catalytic mechanism. Phosphoenolpyruvate-binding residues include Arg351, Arg394, and Lys419.

It belongs to the EPSP synthase family. Monomer.

It localises to the cytoplasm. The enzyme catalyses 3-phosphoshikimate + phosphoenolpyruvate = 5-O-(1-carboxyvinyl)-3-phosphoshikimate + phosphate. Its pathway is metabolic intermediate biosynthesis; chorismate biosynthesis; chorismate from D-erythrose 4-phosphate and phosphoenolpyruvate: step 6/7. Functionally, catalyzes the transfer of the enolpyruvyl moiety of phosphoenolpyruvate (PEP) to the 5-hydroxyl of shikimate-3-phosphate (S3P) to produce enolpyruvyl shikimate-3-phosphate and inorganic phosphate. In Burkholderia vietnamiensis (strain G4 / LMG 22486) (Burkholderia cepacia (strain R1808)), this protein is 3-phosphoshikimate 1-carboxyvinyltransferase.